The sequence spans 200 residues: UPF0637 protein LCABL_14170 (200 aa).

The protein belongs to the UPF0637 family.

In Lacticaseibacillus casei (strain BL23) (Lactobacillus casei), this protein is UPF0637 protein LCABL_14170.